A 444-amino-acid polypeptide reads, in one-letter code: MQVTETLKEGLKRAYTITVTAAELDAKVQEKLVEAQPDIEMKGFRKGKVPLAMLRKQFGPRLLGDAMQDAIDGAMRDHLETSGDRPAMQPEVRMVDGETWQEGTDVVVEMKYEALPEIPEIETSKVTLERLVVKADEAAVDEALKNLAESAQNFDDRRKGSKAKDGDQIVIDFKGSVDGELFEGGSAEDYPLVLGSGSFIPGFEEQLVGAKVEDEVTVKVTFPTEYGAKHLAGKEAEFACTVKAVKAPKPAEIDDELAKKYGAEDLAALKAQIAERLEAEYKGASRAVLKRALLDQLDTMVSFELPSKLVEAEAHQIAHQLWHEEHPEEHGHNHGTIEPTDEHKALAERRVRLGLLLAEIGRKAEVTVTDAEMTQAVLAQARQYPGQERAYFEFVQKNPQIQQQLRAPIFEDKVVDLILEGATVTEKEVGKDDLQKAIEALDEM.

Residues 166–251 (GDQIVIDFKG…VKAVKAPKPA (86 aa)) enclose the PPIase FKBP-type domain.

The protein belongs to the FKBP-type PPIase family. Tig subfamily.

It is found in the cytoplasm. It carries out the reaction [protein]-peptidylproline (omega=180) = [protein]-peptidylproline (omega=0). Its function is as follows. Involved in protein export. Acts as a chaperone by maintaining the newly synthesized protein in an open conformation. Functions as a peptidyl-prolyl cis-trans isomerase. In Cereibacter sphaeroides (strain ATCC 17025 / ATH 2.4.3) (Rhodobacter sphaeroides), this protein is Trigger factor.